A 946-amino-acid chain; its full sequence is Bifunctional glutamine synthetase adenylyltransferase/adenylyl-removing enzyme (946 aa).

Residues 1–440 form an adenylyl removase region; it reads MKPLSSPLQQ…VFNELIGDDE (440 aa). The tract at residues 449 to 946 is adenylyl transferase; sequence SEQWRELWQD…ASWQKWLVEE (498 aa).

This sequence belongs to the GlnE family. Mg(2+) serves as cofactor.

It catalyses the reaction [glutamine synthetase]-O(4)-(5'-adenylyl)-L-tyrosine + phosphate = [glutamine synthetase]-L-tyrosine + ADP. The enzyme catalyses [glutamine synthetase]-L-tyrosine + ATP = [glutamine synthetase]-O(4)-(5'-adenylyl)-L-tyrosine + diphosphate. Involved in the regulation of glutamine synthetase GlnA, a key enzyme in the process to assimilate ammonia. When cellular nitrogen levels are high, the C-terminal adenylyl transferase (AT) inactivates GlnA by covalent transfer of an adenylyl group from ATP to specific tyrosine residue of GlnA, thus reducing its activity. Conversely, when nitrogen levels are low, the N-terminal adenylyl removase (AR) activates GlnA by removing the adenylyl group by phosphorolysis, increasing its activity. The regulatory region of GlnE binds the signal transduction protein PII (GlnB) which indicates the nitrogen status of the cell. This Shigella dysenteriae serotype 1 (strain Sd197) protein is Bifunctional glutamine synthetase adenylyltransferase/adenylyl-removing enzyme.